A 203-amino-acid chain; its full sequence is AFG2-interacting ribosome maturation factor (203 aa).

Part of the 55LCC heterohexameric ATPase complex composed at least of AIRIM, AFG2A, AFG2B and CINP. Does not associate with pre-60S ribosomal particles. In terms of processing, phosphorylated on serines by CK2 kinase.

The protein resides in the nucleus. Its subcellular location is the cytoplasm. Its function is as follows. Part of the 55LCC heterohexameric ATPase complex which is chromatin-associated and promotes replisome proteostasis to maintain replication fork progression and genome stability. Required for replication fork progression, sister chromatid cohesion, and chromosome stability. The ATPase activity is specifically enhanced by replication fork DNA and is coupled to cysteine protease-dependent cleavage of replisome substrates in response to replication fork damage. Uses ATPase activity to process replisome substrates in S-phase, facilitating their proteolytic turnover from chromatin to ensure DNA replication and mitotic fidelity. Involved in the cytoplasmic maturation steps of pre-60S ribosomal particles by promoting the release of shuttling protein RSL24D1/RLP24 from the pre-ribosomal particles. This chain is AFG2-interacting ribosome maturation factor, found in Homo sapiens (Human).